Here is a 252-residue protein sequence, read N- to C-terminus: Pantothenate synthetase (252 aa).

29-36 lines the ATP pocket; the sequence is MGNLHAGH. H36 acts as the Proton donor in catalysis. Q60 contributes to the (R)-pantoate binding site. Q60 lines the beta-alanine pocket. Position 146-149 (146-149) interacts with ATP; that stretch reads GEKD. Residue Q152 coordinates (R)-pantoate. ATP contacts are provided by residues V175 and 183–186; that span reads CSSR.

The protein belongs to the pantothenate synthetase family. In terms of assembly, homodimer.

Its subcellular location is the cytoplasm. The catalysed reaction is (R)-pantoate + beta-alanine + ATP = (R)-pantothenate + AMP + diphosphate + H(+). It functions in the pathway cofactor biosynthesis; (R)-pantothenate biosynthesis; (R)-pantothenate from (R)-pantoate and beta-alanine: step 1/1. Its function is as follows. Catalyzes the condensation of pantoate with beta-alanine in an ATP-dependent reaction via a pantoyl-adenylate intermediate. This is Pantothenate synthetase from Legionella pneumophila subsp. pneumophila (strain Philadelphia 1 / ATCC 33152 / DSM 7513).